The primary structure comprises 152 residues: UPF0266 membrane protein KPK_1957 (152 aa).

Transmembrane regions (helical) follow at residues 6–26 (LVII…QFIM), 45–65 (VDGL…ITQH), and 67–87 (TPIT…LFWI).

It belongs to the UPF0266 family.

It localises to the cell inner membrane. This is UPF0266 membrane protein KPK_1957 from Klebsiella pneumoniae (strain 342).